The chain runs to 515 residues: Cytochrome P450 76C3 (515 aa).

Residues 5 to 25 traverse the membrane as a helical segment; that stretch reads LIQGMSLPLYFLLTLFFFFFA. Cys451 lines the heme pocket.

This sequence belongs to the cytochrome P450 family. Requires heme as cofactor.

The protein localises to the membrane. This Arabidopsis thaliana (Mouse-ear cress) protein is Cytochrome P450 76C3 (CYP76C3).